A 396-amino-acid chain; its full sequence is Interleukin enhancer-binding factor 2 homolog (396 aa).

The 358-residue stretch at 22-379 folds into the DZF domain; the sequence is KTFVPRHPFD…KKEGDLEEDI (358 aa). Residues 367 to 396 form a disordered region; sequence PTDKKEGDLEEDIDMIENENEEEGSDDGAE. Residues 374–396 are compositionally biased toward acidic residues; sequence DLEEDIDMIENENEEEGSDDGAE.

It is found in the nucleus. Its function is as follows. May regulate transcription of undefined genes. The sequence is that of Interleukin enhancer-binding factor 2 homolog from Drosophila melanogaster (Fruit fly).